The sequence spans 637 residues: Phosphomethylpyrimidine synthase (637 aa).

Residues Asn-242, Met-271, Tyr-300, His-336, 356–358 (SRG), 397–400 (DGLR), and Glu-436 contribute to the substrate site. Zn(2+) is bound at residue His-440. Tyr-463 lines the substrate pocket. Position 504 (His-504) interacts with Zn(2+). The [4Fe-4S] cluster site is built by Cys-584, Cys-587, and Cys-592.

It belongs to the ThiC family. In terms of assembly, homodimer. Requires [4Fe-4S] cluster as cofactor.

It catalyses the reaction 5-amino-1-(5-phospho-beta-D-ribosyl)imidazole + S-adenosyl-L-methionine = 4-amino-2-methyl-5-(phosphooxymethyl)pyrimidine + CO + 5'-deoxyadenosine + formate + L-methionine + 3 H(+). It participates in cofactor biosynthesis; thiamine diphosphate biosynthesis. Its function is as follows. Catalyzes the synthesis of the hydroxymethylpyrimidine phosphate (HMP-P) moiety of thiamine from aminoimidazole ribotide (AIR) in a radical S-adenosyl-L-methionine (SAM)-dependent reaction. In Bordetella avium (strain 197N), this protein is Phosphomethylpyrimidine synthase.